Reading from the N-terminus, the 51-residue chain is MDYAIKPWWAARWETVEPEPEEPVYTDEETVYNEPTINDLIDMEMGHDYSR.

This is an uncharacterized protein from Enterobacteria phage T4 (Bacteriophage T4).